The sequence spans 427 residues: Four-jointed box protein 1 (427 aa).

The signal sequence occupies residues 1 to 18 (MRALSANLFAVLLMCALA). N-linked (GlcNAc...) asparagine glycans are attached at residues Asn81, Asn244, and Asn270.

The protein localises to the secreted. In terms of biological role, may act as an inhibitor of dendrite extension and branching. This chain is Four-jointed box protein 1 (fjx1), found in Xiphophorus maculatus (Southern platyfish).